The chain runs to 356 residues: Arginine kinase (356 aa).

A Phosphagen kinase N-terminal domain is found at 8-91; the sequence is EKLEAGFKKL…FDPIIEDYHG (84 aa). 64–68 lines the substrate pocket; it reads GVGIY. The 238-residue stretch at 119-356 folds into the Phosphagen kinase C-terminal domain; the sequence is YVISTRVRCG…LELIKIEGSL (238 aa). ATP is bound by residues 122 to 126 and His185; that span reads STRVR. Glu225 contributes to the substrate binding site. Arg229 provides a ligand contact to ATP. Cys271 serves as a coordination point for substrate. ATP is bound by residues 280 to 284 and 309 to 314; these read RASVH and RGSTGE. Glu314 provides a ligand contact to substrate.

This sequence belongs to the ATP:guanido phosphotransferase family.

It catalyses the reaction L-arginine + ATP = N(omega)-phospho-L-arginine + ADP + H(+). In Schistocerca americana (American grasshopper), this protein is Arginine kinase (ARGK).